The primary structure comprises 158 residues: Tryptophan-rich sensory protein (158 aa).

The next 5 helical transmembrane spans lie at 5 to 25 (WALF…GALL), 44 to 65 (WVFP…MRVA), 73 to 93 (ALAF…VFFG), 97 to 119 (MATA…WAFF), and 124 to 144 (WAGV…GLNF).

It belongs to the TspO/BZRP family. In terms of assembly, homodimer.

It localises to the membrane. The protein resides in the cell inner membrane. Its function is as follows. May play a role in the transmembrane transport of tetrapyrroles and similar compounds, and thereby contribute to the regulation of tetrapyrrole biosynthesis. Binds tetrapyrroles and promotes the photooxidative degradation of protoporphyrin IX. Binds protoporphyrin IX, hemin, and coproporphyrin III, but does not bind delta-aminolevulinic acid. Can bind bilirubin, curcumin, gossypol, retinoic acid, cholesterol and the benzodiazepine receptor agonist PK-11195 (in vitro). Plays a role in the response to low oxygen levels and in the regulation of the biosynthesis of photosynthetic pigments. In Cereibacter sphaeroides (Rhodobacter sphaeroides), this protein is Tryptophan-rich sensory protein.